We begin with the raw amino-acid sequence, 554 residues long: 3-(3-hydroxy-phenyl)propionate/3-hydroxycinnamic acid hydroxylase (554 aa).

FAD is bound by residues 17 to 46 and 285 to 295; these read QVAI…VVEK and FRINRVLLAGD.

The protein belongs to the PheA/TfdB FAD monooxygenase family. FAD is required as a cofactor.

The enzyme catalyses 3-(3-hydroxyphenyl)propanoate + NADH + O2 + H(+) = 3-(2,3-dihydroxyphenyl)propanoate + NAD(+) + H2O. The catalysed reaction is (2E)-3-(3-hydroxyphenyl)prop-2-enoate + NADH + O2 + H(+) = (2E)-3-(2,3-dihydroxyphenyl)prop-2-enoate + NAD(+) + H2O. It functions in the pathway aromatic compound metabolism; 3-phenylpropanoate degradation. In terms of biological role, catalyzes the insertion of one atom of molecular oxygen into position 2 of the phenyl ring of 3-(3-hydroxyphenyl)propionate (3-HPP) and hydroxycinnamic acid (3HCI). The sequence is that of 3-(3-hydroxy-phenyl)propionate/3-hydroxycinnamic acid hydroxylase from Klebsiella pneumoniae subsp. pneumoniae (strain ATCC 700721 / MGH 78578).